The chain runs to 945 residues: Poly [ADP-ribose] polymerase 1 (945 aa).

Residues 10-96 (YAIEYAKSGR…KLRQEIQHFK (87 aa)) form a PARP-type 1 zinc finger. Cys22, Cys25, His54, and Cys57 together coordinate Zn(2+). The segment at 117-183 (IKTEKSLSNR…DYEENFKIKA (67 aa)) adopts a PARP-type 2; degenerate zinc-finger fold. The segment at 195–251 (RRSTEPATPASASPTPPEAETPVLSAEGSPESSNKRPASSEIIEIDGEGNPDENDFA) is disordered. The segment covering 237-248 (IEIDGEGNPDEN) has biased composition (acidic residues). Residues 258-397 (KEARLMEVQK…NQMSERLYIG (140 aa)) enclose the PADR1 zinc-binding domain. The segment at 324–369 (GCPIICQTCSNGKIVYNSSCRTYVCTGYATEYSKCTYESKNPIRTP) is zinc ribbon. Zn(2+) is bound by residues Cys329, Cys332, Cys348, and Cys358. The 100-residue stretch at 464 to 563 (RCHVFKNEID…KHFRKMPGMF (100 aa)) folds into the WGR domain. The PARP alpha-helical domain maps to 586 to 704 (KTLLPKSVKE…DIKFAYDQIS (119 aa)). Residues 717–945 (DPVDINYQKL…RVKMHHARHL (229 aa)) enclose the PARP catalytic domain.

This sequence belongs to the ARTD/PARP family.

It is found in the nucleus. The catalysed reaction is NAD(+) + (ADP-D-ribosyl)n-acceptor = nicotinamide + (ADP-D-ribosyl)n+1-acceptor + H(+).. It catalyses the reaction L-aspartyl-[protein] + NAD(+) = 4-O-(ADP-D-ribosyl)-L-aspartyl-[protein] + nicotinamide. The enzyme catalyses L-glutamyl-[protein] + NAD(+) = 5-O-(ADP-D-ribosyl)-L-glutamyl-[protein] + nicotinamide. With respect to regulation, inhibited by N-(6-oxo-5,6-dihydrophenanthridin-2-yl)-N,N-dimethylacetamide HCl (PJ34), 1,5-dihydroxyisoquinoline (DHQ) and 3-aminobenzamide (3AB). Its function is as follows. Poly[ADP-ribose] polymerase modifies various nuclear proteins by poly(ADP-ribosyl)ation, a post-translational modification synthesized after DNA damage that appears as an obligatory step in a detection/signaling pathway leading to the reparation of DNA strand breaks and programmed cell death. Involved in protection of the genome against mutations. The protein is Poly [ADP-ribose] polymerase 1 of Caenorhabditis elegans.